A 147-amino-acid polypeptide reads, in one-letter code: Large-conductance mechanosensitive channel (147 aa).

The next 2 helical transmembrane spans lie at 14-34 (VVDM…VKSL) and 85-105 (FGLF…LFMI).

This sequence belongs to the MscL family. In terms of assembly, homopentamer.

The protein localises to the cell inner membrane. In terms of biological role, channel that opens in response to stretch forces in the membrane lipid bilayer. May participate in the regulation of osmotic pressure changes within the cell. The chain is Large-conductance mechanosensitive channel from Tolumonas auensis (strain DSM 9187 / NBRC 110442 / TA 4).